The primary structure comprises 434 residues: MRDKTGPKFGPYQPDDEAVSPSRRRLILGMGMVSGALVLGGAKTAQAADCRSPDVAGTQDERWQKQPFYGQHQAGVLTPQQAAMMLVAFDVLATDKTSLIRLFKLLTERLAFLTTGGRAPSVNAKLPPLDSGIMGPEIYPDNLTVTVSVGNALFDERFGLQGQKPLRLQRMTRFPNDSLDAGLCHGDVMLQICANTNETVIHALRDIIKHTPDLLSVRWKREGFISAHAARSKGQETPINLLGFKDGTANPKISNKPLINNVVWVSNNAGEPAWAVGGSYQVVRIIRFKVEFWDRTPLQEQQTIFGRDKNSGAPLGMQHEHDEPNYAKDPEGKVIPMDAHIRLANPRTIETQRNLMLRRGYSYSLGVSNSGQLDMGLLFVCYQSDLAQAFLTVQERLNGEALEEYVKPIGGGYFFTLPGVADANHYLAQSLLEA.

A signal peptide (tat-type signal) is located at residues 1–45 (MRDKTGPKFGPYQPDDEAVSPSRRRLILGMGMVSGALVLGGAKTA). Residues 247 to 249 (GTA), histidine 340, 345 to 347 (NPR), and arginine 358 contribute to the heme b site.

This sequence belongs to the DyP-type peroxidase family. EfeB subfamily. In terms of assembly, homodimer. Part of a ferrous iron transporter composed of EfeU, EfeO and EfeB. Heme b is required as a cofactor. Post-translationally, predicted to be exported by the Tat system. The position of the signal peptide cleavage has not been experimentally proven.

The protein resides in the periplasm. The catalysed reaction is heme b + 2 H(+) = protoporphyrin IX + Fe(2+). Functionally, involved in the recovery of exogenous heme iron. Extracts iron from heme while preserving the protoporphyrin ring intact. This chain is Deferrochelatase (efeB), found in Yersinia pseudotuberculosis serotype I (strain IP32953).